Reading from the N-terminus, the 941-residue chain is Pre-mRNA-processing factor 6 (941 aa).

The segment at 1–79 (MNKKKKPFLG…DEDLNDTNYD (79 aa)) is disordered. Residues 39–65 (DANDPVDDRHAPPGKRTVGDQMKKNQA) are compositionally biased toward basic and acidic residues. The span at 66–78 (ADDDDEDLNDTNY) shows a compositional bias: acidic residues. Phosphoserine is present on Ser-143. Phosphothreonine is present on residues Thr-180, Thr-266, and Thr-275. Ser-279 carries the post-translational modification Phosphoserine. HAT repeat units follow at residues 384-416 (TDIRAKKRVLRKALEHVPNSVRLWKAAVELEEP), 418-444 (DARIMLSRAVECCPTSVELWLALARLE), 445-476 (TYENARKVLNKARENIPTDRHIWITAAKLEEA), 554-586 (NALECARAIYAYALQVFPSKKSVWLRAAYFEKN), 588-620 (GTRESLEALLQRAVAHCPKAEVLWLMGAKSKWL), 622-654 (GDVPAARSILALAFQANPNSEEIWLAAVKLESE), 689-721 (DNIRAAQDLCEEALRHYEDFPKLWMMKGQIEEQ), 723-755 (EMMEKAREAYNQGLKKCPHSTPLWLLLSRLEEK), and 855-887 (RKITKAREWFHRTVKIDSDLGDAWAFFYKFELQ).

In terms of assembly, identified in the spliceosome B complex. Identified in the spliceosome C complex. Associates with the U5 snRNP particle. Component of the U4/U6-U5 tri-snRNP complex composed of the U4, U6 and U5 snRNAs and at least PRPF3, PRPF4, PRPF6, PRPF8, PRPF31, SNRNP200, TXNL4A, SNRNP40, DDX23, CD2BP2, PPIH, SNU13, EFTUD2, SART1 and USP39, LSm proteins LSm2-8 and Sm proteins. Interacts with ARAF. Interacts with AR and NR3C1, but not ESR1, independently of the presence of hormones. Interacts with USH1G. Post-translationally, phosphorylated by PRP4K during spliceosome assembly. Widely expressed.

The protein localises to the nucleus. Its subcellular location is the nucleoplasm. The protein resides in the nucleus speckle. Its function is as follows. Involved in pre-mRNA splicing as component of the U4/U6-U5 tri-snRNP complex, one of the building blocks of the spliceosome. Enhances dihydrotestosterone-induced transactivation activity of AR, as well as dexamethasone-induced transactivation activity of NR3C1, but does not affect estrogen-induced transactivation. The sequence is that of Pre-mRNA-processing factor 6 from Homo sapiens (Human).